The sequence spans 170 residues: Adenine phosphoribosyltransferase (170 aa).

This sequence belongs to the purine/pyrimidine phosphoribosyltransferase family. As to quaternary structure, homodimer.

It localises to the cytoplasm. The catalysed reaction is AMP + diphosphate = 5-phospho-alpha-D-ribose 1-diphosphate + adenine. The protein operates within purine metabolism; AMP biosynthesis via salvage pathway; AMP from adenine: step 1/1. Its function is as follows. Catalyzes a salvage reaction resulting in the formation of AMP, that is energically less costly than de novo synthesis. In Mycoplasma mycoides subsp. mycoides SC (strain CCUG 32753 / NCTC 10114 / PG1), this protein is Adenine phosphoribosyltransferase.